The chain runs to 198 residues: Superoxide dismutase [Fe] (198 aa).

Fe(3+) is bound by residues histidine 27, histidine 74, aspartate 157, and histidine 161.

The protein belongs to the iron/manganese superoxide dismutase family. In terms of assembly, homodimer. Fe(3+) is required as a cofactor.

The enzyme catalyses 2 superoxide + 2 H(+) = H2O2 + O2. Functionally, destroys superoxide anion radicals which are normally produced within the cells and which are toxic to biological systems. This Pseudomonas putida (Arthrobacter siderocapsulatus) protein is Superoxide dismutase [Fe] (sodB).